We begin with the raw amino-acid sequence, 383 residues long: S-adenosylmethionine synthase (383 aa).

Histidine 15 serves as a coordination point for ATP. Aspartate 17 lines the Mg(2+) pocket. Glutamate 43 is a binding site for K(+). L-methionine is bound by residues glutamate 56 and glutamine 99. Residues 99-109 are flexible loop; that stretch reads QSPDINQGVDR. ATP-binding positions include 164-166, 230-231, aspartate 239, 245-246, alanine 262, and lysine 266; these read DAK, RF, and RK. Aspartate 239 is an L-methionine binding site. Lysine 270 lines the L-methionine pocket.

Belongs to the AdoMet synthase family. As to quaternary structure, homotetramer; dimer of dimers. Mg(2+) serves as cofactor. Requires K(+) as cofactor.

It is found in the cytoplasm. It catalyses the reaction L-methionine + ATP + H2O = S-adenosyl-L-methionine + phosphate + diphosphate. Its pathway is amino-acid biosynthesis; S-adenosyl-L-methionine biosynthesis; S-adenosyl-L-methionine from L-methionine: step 1/1. Its function is as follows. Catalyzes the formation of S-adenosylmethionine (AdoMet) from methionine and ATP. The overall synthetic reaction is composed of two sequential steps, AdoMet formation and the subsequent tripolyphosphate hydrolysis which occurs prior to release of AdoMet from the enzyme. The polypeptide is S-adenosylmethionine synthase (Shewanella sp. (strain W3-18-1)).